The primary structure comprises 432 residues: Protein distal antenna-related (432 aa).

One can recognise an HTH psq-type domain in the interval 15-66; the sequence is TRGKRPLRNLTPNDKVRAIQRIHNGETKASVSRDLGVPESTLRGWCKNEQKL. A DNA-binding region (H-T-H motif) is located at residues 42–62; it reads KASVSRDLGVPESTLRGWCKN. 2 disordered regions span residues 195 to 221 and 401 to 432; these read ESAD…NSTK and SCAS…DGEQ. Composition is skewed to polar residues over residues 202–211 and 401–425; these read KSPQSTTDIT and SCAS…TSIA.

In terms of assembly, interacts with itself, dan, ey and dac to form a complex (or complexes) containing the RD factors.

It localises to the nucleus. Its function is as follows. Probable transcription factor with a role in the retinal determination (RD) network. Regulates ato expression and is required for normal R8 induction and differentiation. Danr appears to repress Dan expression, but Dan is required for Danr expression anterior to the morphogenetic furrow (MF). Dan and Danr lie downstream of so and require dac function for highest levels of expression. Contributes to differentiation of antenna-specific characteristics; effector gene that acts downstream of homothorax (hth), Distal-less (Dll), cut (ct) and spineless (ss) genes to control differentiation of distal antennal structures. The protein is Protein distal antenna-related of Drosophila pseudoobscura pseudoobscura (Fruit fly).